The primary structure comprises 415 residues: Histidine--tRNA ligase (415 aa).

It belongs to the class-II aminoacyl-tRNA synthetase family. As to quaternary structure, homodimer.

The protein resides in the cytoplasm. It carries out the reaction tRNA(His) + L-histidine + ATP = L-histidyl-tRNA(His) + AMP + diphosphate + H(+). This Gluconobacter oxydans (strain 621H) (Gluconobacter suboxydans) protein is Histidine--tRNA ligase.